Consider the following 486-residue polypeptide: N-succinylglutamate 5-semialdehyde dehydrogenase (486 aa).

220 to 225 serves as a coordination point for NAD(+); that stretch reads GSSRTG. Residues Glu243 and Cys277 contribute to the active site.

It belongs to the aldehyde dehydrogenase family. AstD subfamily.

It carries out the reaction N-succinyl-L-glutamate 5-semialdehyde + NAD(+) + H2O = N-succinyl-L-glutamate + NADH + 2 H(+). It participates in amino-acid degradation; L-arginine degradation via AST pathway; L-glutamate and succinate from L-arginine: step 4/5. Functionally, catalyzes the NAD-dependent reduction of succinylglutamate semialdehyde into succinylglutamate. This is N-succinylglutamate 5-semialdehyde dehydrogenase from Shewanella sediminis (strain HAW-EB3).